The chain runs to 525 residues: GMP synthase [glutamine-hydrolyzing] (525 aa).

The region spanning 11–200 (PVLVVDFGAQ…LTEIAGLEQN (190 aa)) is the Glutamine amidotransferase type-1 domain. Cys-88 acts as the Nucleophile in catalysis. Active-site residues include His-174 and Glu-176. The GMPS ATP-PPase domain occupies 201 to 399 (WTAANIAEEL…LGLPEEIVNR (199 aa)). 229 to 235 (SGGVDSA) is an ATP binding site.

As to quaternary structure, homodimer.

The enzyme catalyses XMP + L-glutamine + ATP + H2O = GMP + L-glutamate + AMP + diphosphate + 2 H(+). Its pathway is purine metabolism; GMP biosynthesis; GMP from XMP (L-Gln route): step 1/1. Functionally, catalyzes the synthesis of GMP from XMP. This Corynebacterium diphtheriae (strain ATCC 700971 / NCTC 13129 / Biotype gravis) protein is GMP synthase [glutamine-hydrolyzing].